Consider the following 110-residue polypeptide: UPF0122 protein SAR1212 (110 aa).

This sequence belongs to the UPF0122 family.

Might take part in the signal recognition particle (SRP) pathway. This is inferred from the conservation of its genetic proximity to ftsY/ffh. May be a regulatory protein. The sequence is that of UPF0122 protein SAR1212 from Staphylococcus aureus (strain MRSA252).